Here is a 956-residue protein sequence, read N- to C-terminus: UvrABC system protein A (956 aa).

Residue 33–40 (GLSGSGKS) coordinates ATP. A C4-type zinc finger spans residues 252–279 (CPYCGFSVGELEPRMFSFNSPFGACPTC). ABC transporter domains follow at residues 309-587 (WRPI…KNSI) and 607-936 (GNGL…KYLK). 639–646 (GVSGSGKS) serves as a coordination point for ATP. A C4-type zinc finger spans residues 738 to 764 (CEACKGDGIIKIEMHFLPDVYVPCEVC).

This sequence belongs to the ABC transporter superfamily. UvrA family. Forms a heterotetramer with UvrB during the search for lesions.

It localises to the cytoplasm. Its function is as follows. The UvrABC repair system catalyzes the recognition and processing of DNA lesions. UvrA is an ATPase and a DNA-binding protein. A damage recognition complex composed of 2 UvrA and 2 UvrB subunits scans DNA for abnormalities. When the presence of a lesion has been verified by UvrB, the UvrA molecules dissociate. This is UvrABC system protein A from Listeria monocytogenes serovar 1/2a (strain ATCC BAA-679 / EGD-e).